The sequence spans 470 residues: Zinc finger CCCH domain-containing protein 7 (470 aa).

Residues 122-144 (AYSKKESEKQSGQNNTSTASRNH) form a disordered region. Residues 131–142 (QSGQNNTSTASR) show a composition bias toward polar residues. C3H1-type zinc fingers lie at residues 240–269 (AKKKKYCQFFTRFGKCNKDDGKCPYVHDPS), 273–294 (VCTKFLNGLCANANCKLTHKVI), 295–321 (PERMPDCSYYLQGLCNNEACPYRHVHV), 322–349 (NPIAPICDGFLKGYCSEGDECRKKHSYN), and 350–372 (CPVFEATGSCSQGLKCKLHHPKN). Residues 370-381 (PKNQSKGRKRKR) are compositionally biased toward basic residues. Residues 370 to 389 (PKNQSKGRKRKRTNEPSQKN) are disordered.

Its function is as follows. Possesses RNA-binding and ribonuclease activities in vitro. The polypeptide is Zinc finger CCCH domain-containing protein 7 (Arabidopsis thaliana (Mouse-ear cress)).